A 526-amino-acid polypeptide reads, in one-letter code: MSLTMADGVEAAAGRSKRQNSLLRKQLALAVRSVQWSYAIFWSSSLTQPGVLEWGEGCYNGDMKKRKKSYESHYKYGLQKSKELRKLYLSMLEGDSGTTVSTTHDNLNDDDDNCHSTSMMLSPDDLSDEEWYYLVSMSYVFSPSQCLPGRASATGETIWLCNAQYAENKLFSRSLLARSASIQTVVCFPYLGGVIELGVTELISEDHNLLRNIKSCLMEISAHQDNDDEKKMEIKISEEKHQLPLGISDEDLHYKRTISTVLNYSADRSGKNDKNIRHRQPNIVTSEPGSSFLRWKQCEQQVSGFVQKKKSQNVLRKILHDVPLMHTKRMFPSQNSGLNQDDPSDRRKENEKFSVLRTMVPTVNEVDKESILNNTIKYLQELEARVEELESCMGSVNFVERQRKTTENLNDSVLIEETSGNYDDSTKIDDNSGETEQVTVFRDKTHLRVKLKETEVVIEVRCSYRDYIVADIMETLSNLHMDAFSVRSHTLNKFLTLNLKAKFRGAAVASVGMIKRELRRVIGDLF.

The disordered stretch occupies residues 330–351; sequence MFPSQNSGLNQDDPSDRRKENE. The segment covering 332 to 341 has biased composition (polar residues); that stretch reads PSQNSGLNQD. The 50-residue stretch at 333–382 folds into the bHLH domain; the sequence is SQNSGLNQDDPSDRRKENEKFSVLRTMVPTVNEVDKESILNNTIKYLQEL.

Homodimer. Interacts with MYB75/PAP1, MYB90/PAP2, MYB4, MYB5, MYB6, MYB23, MYB82, MYB113, MYB114, TT2, MYB0/GL1, and MYB66/WER. Mostly expressed in developing seeds. Also detected in stems and leaves.

The protein resides in the nucleus. In terms of biological role, trancsription activator, when associated with MYB75/PAP1 or MYB90/PAP2. In Arabidopsis thaliana (Mouse-ear cress), this protein is Transcription factor MYC1 (BHLH12).